The sequence spans 394 residues: Protein NDRG1 (394 aa).

Ser-2 carries the N-acetylserine modification. Phosphoserine is present on residues Ser-2, Ser-319, and Ser-326. Positions 325–394 (RSRTASGSSV…AGPKSMEVSC (70 aa)) are disordered. Residues 327–339 (RTASGSSVTSLDG) show a composition bias toward polar residues. Thr-328 is subject to Phosphothreonine; by SGK1. 2 positions are modified to phosphoserine; by SGK1: Ser-330 and Ser-332. Ser-333 bears the Phosphoserine mark. Thr-335 carries the phosphothreonine modification. Position 336 is a phosphoserine (Ser-336). 3 repeat units span residues 339–348 (GTRSRSHTSE), 349–358 (GTRSRSHTSE), and 359–368 (GTRSRSHTSE). Positions 339-368 (GTRSRSHTSEGTRSRSHTSEGTRSRSHTSE) are 3 X 10 AA tandem repeats of G-T-R-S-R-S-H-T-S-E. Position 340 is a phosphothreonine (Thr-340). The residue at position 342 (Ser-342) is a Phosphoserine. Basic and acidic residues predominate over residues 345–371 (HTSEGTRSRSHTSEGTRSRSHTSEGAH). Thr-346 is modified (phosphothreonine; by SGK1). The residue at position 352 (Ser-352) is a Phosphoserine. Position 356 is a phosphothreonine; by SGK1 (Thr-356). Ser-362 bears the Phosphoserine mark. A Phosphoserine; by SGK1 modification is found at Ser-364. Thr-366 carries the phosphothreonine; by SGK1 modification. Thr-375 carries the phosphothreonine modification.

The protein belongs to the NDRG family. Interacts with RAB4A (membrane-bound form); the interaction involves NDRG1 in vesicular recycling of CDH1. Under stress conditions, phosphorylated in the C-terminal on many serine and threonine residues. Phosphorylated in vitro by PKA. Phosphorylation enhanced by increased intracellular cAMP levels. Homocysteine induces dephosphorylation. Phosphorylation by SGK1 is cell cycle dependent. In terms of tissue distribution, ubiquitous; expressed most prominently in placental membranes and prostate, kidney, small intestine, and ovary tissues. Also expressed in heart, brain, skeletal muscle, lung, liver and pancreas. Low levels in peripheral blood leukocytes and in tissues of the immune system. Expressed mainly in epithelial cells. Also found in Schwann cells of peripheral neurons. Reduced expression in adenocarcinomas compared to normal tissues. In colon, prostate and placental membranes, the cells that border the lumen show the highest expression.

It is found in the cytoplasm. It localises to the cytosol. The protein localises to the cytoskeleton. Its subcellular location is the microtubule organizing center. The protein resides in the centrosome. It is found in the nucleus. It localises to the cell membrane. Its function is as follows. Stress-responsive protein involved in hormone responses, cell growth, and differentiation. Acts as a tumor suppressor in many cell types. Necessary but not sufficient for p53/TP53-mediated caspase activation and apoptosis. Has a role in cell trafficking, notably of the Schwann cell, and is necessary for the maintenance and development of the peripheral nerve myelin sheath. Required for vesicular recycling of CDH1 and TF. May also function in lipid trafficking. Protects cells from spindle disruption damage. Functions in p53/TP53-dependent mitotic spindle checkpoint. Regulates microtubule dynamics and maintains euploidy. The polypeptide is Protein NDRG1 (NDRG1) (Homo sapiens (Human)).